The primary structure comprises 156 residues: Small ribosomal subunit protein uS7 (156 aa).

It belongs to the universal ribosomal protein uS7 family. As to quaternary structure, part of the 30S ribosomal subunit. Contacts proteins S9 and S11.

In terms of biological role, one of the primary rRNA binding proteins, it binds directly to 16S rRNA where it nucleates assembly of the head domain of the 30S subunit. Is located at the subunit interface close to the decoding center, probably blocks exit of the E-site tRNA. In Bifidobacterium longum (strain NCC 2705), this protein is Small ribosomal subunit protein uS7.